We begin with the raw amino-acid sequence, 187 residues long: Flavin-dependent monooxygenase, reductase subunit HsaB (187 aa).

FAD contacts are provided by residues P32–A36, Q38–S39, C53–T55, R59–S60, and R85–F86. Residue F152–G155 participates in NAD(+) binding.

This sequence belongs to the non-flavoprotein flavin reductase family. In terms of assembly, hsaAB monooxygenase consists of an oxygenase component HsaA and a reductase component HsaB.

The enzyme catalyses a reduced flavin + NAD(+) = an oxidized flavin + NADH + 2 H(+). Its pathway is lipid metabolism; steroid biosynthesis. Catalyzes the reduction of free flavins (FMN or FAD) by NADH. Subsequently, the reduced flavins diffuse to the HsaA oxygenase subunit. The protein is Flavin-dependent monooxygenase, reductase subunit HsaB (hsaB) of Mycobacterium tuberculosis (strain CDC 1551 / Oshkosh).